Here is a 449-residue protein sequence, read N- to C-terminus: Glucose-6-phosphate isomerase (449 aa).

Residue E291 is the Proton donor of the active site. Residues H312 and K426 contribute to the active site.

The protein belongs to the GPI family.

The protein localises to the cytoplasm. The enzyme catalyses alpha-D-glucose 6-phosphate = beta-D-fructose 6-phosphate. Its pathway is carbohydrate biosynthesis; gluconeogenesis. It participates in carbohydrate degradation; glycolysis; D-glyceraldehyde 3-phosphate and glycerone phosphate from D-glucose: step 2/4. Its function is as follows. Catalyzes the reversible isomerization of glucose-6-phosphate to fructose-6-phosphate. The sequence is that of Glucose-6-phosphate isomerase from Clostridium botulinum (strain Eklund 17B / Type B).